The chain runs to 2168 residues: Genome polyprotein (2168 aa).

Positions 1–20 (MGMQMSKNTAGSHTTVTQAS) are disordered. A lipid anchor (N-myristoyl glycine; by host) is attached at glycine 2. Residues 2 to 1479 (GMQMSKNTAG…NVSIATTILS (1478 aa)) are Cytoplasmic-facing. Amphipathic alpha-helix regions lie at residues 551–567 (ALQAPVETALNSAISSV) and 554–575 (APVETALNSAISSVIAGITAQD). Residues 576–589 (TQPSSHNISTSETP) are compositionally biased toward polar residues. Residues 576-607 (TQPSSHNISTSETPALQAAETGASSNASDEGM) form a disordered region. Active-site for protease 2A activity residues include histidine 856 and aspartate 874. The Zn(2+) site is built by cysteine 891 and cysteine 893. Catalysis depends on cysteine 945, which acts as the For protease 2A activity. Cysteine 951 and histidine 953 together coordinate Zn(2+). Positions 1085 to 1157 (GDDWLKKFTS…EHSCPTTEQQ (73 aa)) are membrane-binding. The segment at 1085–1223 (GDDWLKKFTS…TAGTGKSLAT (139 aa)) is oligomerization. The segment at 1106-1110 (AEKIM) is RNA-binding. In terms of domain architecture, SF3 helicase spans 1189-1347 (EKRILGYIQF…YKTHNGTLDV (159 aa)). Zn(2+)-binding residues include cysteine 1354, cysteine 1365, and cysteine 1370. The segment at 1354-1370 (CEDCCPANFKTCMPLIC) adopts a C4-type; degenerate zinc-finger fold. The tract at residues 1397–1404 (EWKRRNQV) is RNA-binding. The tract at residues 1408–1413 (YVRLFQ) is oligomerization. Residues 1480 to 1495 (SLVLLTSVITLVYLVY) lie within the membrane without spanning it. The Cytoplasmic portion of the chain corresponds to 1496 to 2168 (RLFAGYQGPY…SLLREWYEKF (673 aa)). Tyrosine 1505 bears the O-(5'-phospho-RNA)-tyrosine mark. The Peptidase C3 domain occupies 1525-1703 (GPLMDFGVGM…FCAALKRSYF (179 aa)). Active-site for protease 3C activity residues include histidine 1564, glutamate 1595, and cysteine 1671. The RdRp catalytic domain maps to 1934-2048 (GELFGFDYTA…ASYPYRIDPA (115 aa)). Mg(2+) is bound by residues aspartate 1940 and aspartate 2035.

It belongs to the picornaviruses polyprotein family. Interacts with capsid protein VP1 and capsid protein VP3 to form heterotrimeric protomers. As to quaternary structure, interacts with capsid protein VP0, and capsid protein VP3 to form heterotrimeric protomers. Five protomers subsequently associate to form pentamers which serve as building blocks for the capsid. Interacts with capsid protein VP2, capsid protein VP3 and capsid protein VP4 following cleavage of capsid protein VP0. In terms of assembly, interacts with capsid protein VP1 and capsid protein VP3 in the mature capsid. Interacts with capsid protein VP0 and capsid protein VP1 to form heterotrimeric protomers. Five protomers subsequently associate to form pentamers which serve as building blocks for the capsid. Interacts with capsid protein VP4 in the mature capsid. Interacts with protein 2C; this interaction may be important for virion morphogenesis. As to quaternary structure, interacts with capsid protein VP1 and capsid protein VP3. In terms of assembly, homodimer. Homohexamer; forms a hexameric ring structure with 6-fold symmetry characteristic of AAA+ ATPases. Interacts (via N-terminus) with host RTN3 (via reticulon domain); this interaction is important for viral replication. Interacts with capsid protein VP3; this interaction may be important for virion morphogenesis. As to quaternary structure, interacts with protein 3CD. In terms of assembly, homodimer. Interacts with host GBF1. Interacts (via GOLD domain) with host ACBD3 (via GOLD domain); this interaction allows the formation of a viral protein 3A/ACBD3 heterotetramer with a 2:2 stoichiometry, which will stimulate the recruitment of host PI4KB in order to synthesize PI4P at the viral RNA replication sites. Interacts with RNA-directed RNA polymerase. As to quaternary structure, interacts with protein 3AB and with RNA-directed RNA polymerase. In terms of assembly, interacts with Viral protein genome-linked and with protein 3CD. It depends on Mg(2+) as a cofactor. Specific enzymatic cleavages in vivo by the viral proteases yield processing intermediates and the mature proteins. Post-translationally, myristoylation is required for the formation of pentamers during virus assembly. Further assembly of 12 pentamers and a molecule of genomic RNA generates the provirion. In terms of processing, during virion maturation, immature virions are rendered infectious following cleavage of VP0 into VP4 and VP2. This maturation seems to be an autocatalytic event triggered by the presence of RNA in the capsid and it is followed by a conformational change infectious virion. Myristoylation is required during RNA encapsidation and formation of the mature virus particle. Post-translationally, VPg is uridylylated by the polymerase into VPg-pUpU. This acts as a nucleotide-peptide primer for the genomic RNA replication.

The protein resides in the virion. It localises to the host cytoplasm. The protein localises to the host cytoplasmic vesicle membrane. It is found in the host nucleus. The enzyme catalyses a ribonucleoside 5'-triphosphate + H2O = a ribonucleoside 5'-diphosphate + phosphate + H(+). It catalyses the reaction Selective cleavage of Tyr-|-Gly bond in the picornavirus polyprotein.. The catalysed reaction is RNA(n) + a ribonucleoside 5'-triphosphate = RNA(n+1) + diphosphate. It carries out the reaction Selective cleavage of Gln-|-Gly bond in the poliovirus polyprotein. In other picornavirus reactions Glu may be substituted for Gln, and Ser or Thr for Gly.. Replication or transcription is subject to high level of random mutations by the nucleotide analog ribavirin. Forms an icosahedral capsid of pseudo T=3 symmetry with capsid proteins VP2 and VP3. The capsid is 300 Angstroms in diameter, composed of 60 copies of each capsid protein and enclosing the viral positive strand RNA genome. Capsid protein VP1 mainly forms the vertices of the capsid. Capsid protein VP1 interacts with host cell receptor to provide virion attachment to target host cells. This attachment induces virion internalization. Tyrosine kinases are probably involved in the entry process. After binding to its receptor, the capsid undergoes conformational changes. Capsid protein VP1 N-terminus (that contains an amphipathic alpha-helix) and capsid protein VP4 are externalized. Together, they shape a pore in the host membrane through which viral genome is translocated to host cell cytoplasm. Its function is as follows. Forms an icosahedral capsid of pseudo T=3 symmetry with capsid proteins VP2 and VP3. The capsid is 300 Angstroms in diameter, composed of 60 copies of each capsid protein and enclosing the viral positive strand RNA genome. In terms of biological role, lies on the inner surface of the capsid shell. After binding to the host receptor, the capsid undergoes conformational changes. Capsid protein VP4 is released, Capsid protein VP1 N-terminus is externalized, and together, they shape a pore in the host membrane through which the viral genome is translocated into the host cell cytoplasm. Functionally, component of immature procapsids, which is cleaved into capsid proteins VP4 and VP2 after maturation. Allows the capsid to remain inactive before the maturation step. Cysteine protease that cleaves viral polyprotein and specific host proteins. It is responsible for the autocatalytic cleavage between the P1 and P2 regions, which is the first cleavage occurring in the polyprotein. Also cleaves the host translation initiation factor EIF4G1, in order to shut down the capped cellular mRNA translation. Inhibits the host nucleus-cytoplasm protein and RNA trafficking by cleaving host members of the nuclear pores. Counteracts stress granule formation probably by antagonizing its assembly or promoting its dissassembly. Its function is as follows. Plays an essential role in the virus replication cycle by acting as a viroporin. Creates a pore in the host endoplasmic reticulum and as a consequence releases Ca2+ in the cytoplasm of infected cell. In turn, high levels of cytoplasmic calcium may trigger membrane trafficking and transport of viral ER-associated proteins to viroplasms, sites of viral genome replication. In terms of biological role, induces and associates with structural rearrangements of intracellular membranes. Displays RNA-binding, nucleotide binding and NTPase activities. May play a role in virion morphogenesis and viral RNA encapsidation by interacting with the capsid protein VP3. Functionally, localizes the viral replication complex to the surface of membranous vesicles. Together with protein 3CD binds the Cis-Active RNA Element (CRE) which is involved in RNA synthesis initiation. Acts as a cofactor to stimulate the activity of 3D polymerase, maybe through a nucleid acid chaperone activity. Localizes the viral replication complex to the surface of membranous vesicles. It inhibits host cell endoplasmic reticulum-to-Golgi apparatus transport and causes the disassembly of the Golgi complex, possibly through GBF1 interaction. This would result in depletion of MHC, trail receptors and IFN receptors at the host cell surface. Plays an essential role in viral RNA replication by recruiting ACBD3 and PI4KB at the viral replication sites, thereby allowing the formation of the rearranged membranous structures where viral replication takes place. Its function is as follows. Acts as a primer for viral RNA replication and remains covalently bound to viral genomic RNA. VPg is uridylylated prior to priming replication into VPg-pUpU. The oriI viral genomic sequence may act as a template for this. The VPg-pUpU is then used as primer on the genomic RNA poly(A) by the RNA-dependent RNA polymerase to replicate the viral genome. During genome replication, the VPg-RNA linkage is removed by the host TDP2, thereby accelerating replication. During the late stage of the replication cycle, host TDP2 is excluded from sites of viral RNA synthesis and encapsidation, allowing for the generation of progeny virions. In terms of biological role, involved in the viral replication complex and viral polypeptide maturation. It exhibits protease activity with a specificity and catalytic efficiency that is different from protease 3C. Protein 3CD lacks polymerase activity. Protein 3CD binds to the 5'UTR of the viral genome. Functionally, replicates the viral genomic RNA on the surface of intracellular membranes. May form linear arrays of subunits that propagate along a strong head-to-tail interaction called interface-I. Covalently attaches UMP to a tyrosine of VPg, which is used to prime RNA synthesis. The positive stranded RNA genome is first replicated at virus induced membranous vesicles, creating a dsRNA genomic replication form. This dsRNA is then used as template to synthesize positive stranded RNA genomes. ss(+)RNA genomes are either translated, replicated or encapsidated. Major viral protease that mediates proteolytic processing of the polyprotein. Cleaves host EIF5B, contributing to host translation shutoff. Also cleaves host PABPC1, contributing to host translation shutoff. Cleaves host NLRP1, triggers host N-glycine-mediated degradation of the autoinhibitory NLRP1 N-terminal fragment. This Sus scrofa (Pig) protein is Genome polyprotein.